Here is a 550-residue protein sequence, read N- to C-terminus: Glucose-6-phosphate isomerase (550 aa).

Residue Glu357 is the Proton donor of the active site. Active-site residues include His389 and Lys509.

This sequence belongs to the GPI family.

The protein localises to the cytoplasm. It catalyses the reaction alpha-D-glucose 6-phosphate = beta-D-fructose 6-phosphate. It participates in carbohydrate biosynthesis; gluconeogenesis. The protein operates within carbohydrate degradation; glycolysis; D-glyceraldehyde 3-phosphate and glycerone phosphate from D-glucose: step 2/4. Functionally, catalyzes the reversible isomerization of glucose-6-phosphate to fructose-6-phosphate. The sequence is that of Glucose-6-phosphate isomerase from Anaeromyxobacter dehalogenans (strain 2CP-C).